The primary structure comprises 388 residues: Oligogalacturonide lyase (388 aa).

The protein resides in the periplasm. The enzyme catalyses 4-(4-deoxy-alpha-D-galact-4-enuronosyl)-D-galacturonate = 2 5-dehydro-4-deoxy-D-glucuronate. It functions in the pathway glycan metabolism; pectin degradation; 2-dehydro-3-deoxy-D-gluconate from pectin: step 3/5. Functionally, involved in degradation of pectin, which causes soft-rod disease in plants. The polypeptide is Oligogalacturonide lyase (ogl) (Pectobacterium atrosepticum (strain SCRI 1043 / ATCC BAA-672) (Erwinia carotovora subsp. atroseptica)).